Reading from the N-terminus, the 218-residue chain is Adenylate kinase (218 aa).

Residue 10–15 (GAGKGT) coordinates ATP. The segment at 30 to 59 (STGDMLRAAVKAGTPLGLEAKKVMDAGGLV) is NMP. AMP is bound by residues Thr31, Arg36, 57-59 (GLV), 85-88 (GFPR), and Gln92. An LID region spans residues 122-159 (GRRVHPASGRSYHVRFNPPKAEGVDDVTGEPLVQRDDD). ATP-binding positions include Arg123 and 132–133 (SY). 2 residues coordinate AMP: Arg156 and Arg167. Residue Gly203 participates in ATP binding.

It belongs to the adenylate kinase family. Monomer.

The protein localises to the cytoplasm. It catalyses the reaction AMP + ATP = 2 ADP. It functions in the pathway purine metabolism; AMP biosynthesis via salvage pathway; AMP from ADP: step 1/1. Catalyzes the reversible transfer of the terminal phosphate group between ATP and AMP. Plays an important role in cellular energy homeostasis and in adenine nucleotide metabolism. The sequence is that of Adenylate kinase from Bordetella bronchiseptica (strain ATCC BAA-588 / NCTC 13252 / RB50) (Alcaligenes bronchisepticus).